The primary structure comprises 122 residues: Anti-sigma-F factor antagonist RsfB (122 aa).

Residues 7–115 (ITVTVADHNG…STLHDALTGV (109 aa)) form the STAS domain. Phosphoserine is present on Ser-61.

Belongs to the anti-sigma-factor antagonist family. In terms of assembly, interacts with anti-sigma-F factor RsbW (UsfX). Its phosphorylation may prevent this interaction. Putative phosphorylation on Ser-61 may prevent interaction with RsbW.

Positive regulator of sigma-F (SigF) activity. Binds to anti-sigma-F factor RsbW (UsfX) preventing its binding to SigF, thus activating transcription. The protein is Anti-sigma-F factor antagonist RsfB (rsfB) of Mycobacterium tuberculosis (strain CDC 1551 / Oshkosh).